We begin with the raw amino-acid sequence, 520 residues long: Chaperone Ric-8B (520 aa).

S468 bears the Phosphoserine mark. The residue at position 473 (T473) is a Phosphothreonine.

Belongs to the synembryn family. Interacts with GDP-bound G(s) G-alpha proteins GNAL and GNAS. Does not interact with G-alpha proteins when they are in complex with subunits beta and gamma. In terms of tissue distribution, predominantly expressed in the mature olfactory sensory neurons and also in a few regions in the brain.

It is found in the cytoplasm. The protein resides in the cell cortex. Its function is as follows. Chaperone that specifically binds and folds nascent G(s) G-alpha proteins (GNAS and GNAL) prior to G protein heterotrimer formation, promoting their association with the plasma membrane. Also acts as a guanine nucleotide exchange factor (GEF) for G(s) proteins by stimulating exchange of bound GDP for free GTP. Acts as an important component for odorant signal transduction by mediating GNAL (G(olf)-alpha) folding, thereby promoting-dependent cAMP accumulation in olfactory sensory neurons. In Mus musculus (Mouse), this protein is Chaperone Ric-8B.